The primary structure comprises 185 residues: UPF0397 protein CPR_1556 (185 aa).

5 helical membrane passes run 11 to 31 (IVAI…GSLP), 44 to 64 (AFLS…IGFI), 71 to 91 (IVFF…VGLI), 111 to 131 (IFMF…LVAP), and 149 to 169 (GVIG…VLIS).

This sequence belongs to the UPF0397 family.

The protein resides in the cell membrane. The sequence is that of UPF0397 protein CPR_1556 from Clostridium perfringens (strain SM101 / Type A).